A 138-amino-acid chain; its full sequence is Transcription antitermination protein NusB (138 aa).

Belongs to the NusB family.

Functionally, involved in transcription antitermination. Required for transcription of ribosomal RNA (rRNA) genes. Binds specifically to the boxA antiterminator sequence of the ribosomal RNA (rrn) operons. The protein is Transcription antitermination protein NusB of Yersinia pseudotuberculosis serotype O:1b (strain IP 31758).